Consider the following 218-residue polypeptide: MRLMLLGGPGAGKGTQASLLINRYKIPQISTGDMLRAAIAKGTPLGLSAQKIMESGGLVSDDIIIGLVKERLKNPDCDRGFLFDGFPRTLVQAEALKDAEIHLDHVIEIAVDDEEIIERISGRRIHQPSGRVYHVVNQPPKNPGVDDITGEPLIQRDDDKEETIRKRLQVYHSQTAPLVQYYKEWAESGSKEAPKFHTISGTGTVDQIFDNIVTILET.

ATP is bound at residue 10–15; it reads GAGKGT. The interval 30 to 59 is NMP; it reads STGDMLRAAIAKGTPLGLSAQKIMESGGLV. Residues threonine 31, arginine 36, 57 to 59, 85 to 88, and glutamine 92 contribute to the AMP site; these read GLV and GFPR. The LID stretch occupies residues 122–159; it reads GRRIHQPSGRVYHVVNQPPKNPGVDDITGEPLIQRDDD. ATP is bound by residues arginine 123 and 132 to 133; that span reads VY. AMP-binding residues include arginine 156 and arginine 167. Glycine 203 is a binding site for ATP.

Belongs to the adenylate kinase family. In terms of assembly, monomer.

It is found in the cytoplasm. It catalyses the reaction AMP + ATP = 2 ADP. It participates in purine metabolism; AMP biosynthesis via salvage pathway; AMP from ADP: step 1/1. Catalyzes the reversible transfer of the terminal phosphate group between ATP and AMP. Plays an important role in cellular energy homeostasis and in adenine nucleotide metabolism. The protein is Adenylate kinase of Legionella pneumophila (strain Lens).